A 384-amino-acid chain; its full sequence is tRNA(Met) cytidine acetate ligase (384 aa).

ATP contacts are provided by residues 7 to 20 (VAEY…HEFL), glycine 101, asparagine 153, and arginine 178.

The protein belongs to the TmcAL family.

Its subcellular location is the cytoplasm. It carries out the reaction cytidine(34) in elongator tRNA(Met) + acetate + ATP = N(4)-acetylcytidine(34) in elongator tRNA(Met) + AMP + diphosphate. Catalyzes the formation of N(4)-acetylcytidine (ac(4)C) at the wobble position of elongator tRNA(Met), using acetate and ATP as substrates. First activates an acetate ion to form acetyladenylate (Ac-AMP) and then transfers the acetyl group to tRNA to form ac(4)C34. This chain is tRNA(Met) cytidine acetate ligase, found in Lactobacillus delbrueckii subsp. bulgaricus (strain ATCC BAA-365 / Lb-18).